Consider the following 119-residue polypeptide: Ribonuclease P protein component (119 aa).

Belongs to the RnpA family. As to quaternary structure, consists of a catalytic RNA component (M1 or rnpB) and a protein subunit.

The catalysed reaction is Endonucleolytic cleavage of RNA, removing 5'-extranucleotides from tRNA precursor.. Its function is as follows. RNaseP catalyzes the removal of the 5'-leader sequence from pre-tRNA to produce the mature 5'-terminus. It can also cleave other RNA substrates such as 4.5S RNA. The protein component plays an auxiliary but essential role in vivo by binding to the 5'-leader sequence and broadening the substrate specificity of the ribozyme. This chain is Ribonuclease P protein component, found in Streptococcus pyogenes serotype M5 (strain Manfredo).